The chain runs to 455 residues: Chromosomal replication initiator protein DnaA (455 aa).

The tract at residues 1–75 is domain I, interacts with DnaA modulators; it reads MDTNNNIEKE…EILSQNKVGM (75 aa). Positions 75 to 106 are domain II; that stretch reads MHLAHSVDVRIEVAPKIQINAQANINYKAIKT. A domain III, AAA+ region region spans residues 107–321; it reads SVKDSYTFEN…GAIIKISVNA (215 aa). Residues Gly-151, Gly-153, Lys-154, and Thr-155 each contribute to the ATP site. The segment at 322-455 is domain IV, binds dsDNA; sequence NLMNAPIDLN…DKKTAFNSSE (134 aa).

This sequence belongs to the DnaA family. In terms of assembly, oligomerizes as a right-handed, spiral filament on DNA at oriC.

The protein resides in the cytoplasm. Plays an essential role in the initiation and regulation of chromosomal replication. ATP-DnaA binds to the origin of replication (oriC) to initiate formation of the DNA replication initiation complex once per cell cycle. Binds the DnaA box (a 9 base pair repeat at the origin) and separates the double-stranded (ds)DNA. Forms a right-handed helical filament on oriC DNA; dsDNA binds to the exterior of the filament while single-stranded (ss)DNA is stabiized in the filament's interior. The ATP-DnaA-oriC complex binds and stabilizes one strand of the AT-rich DNA unwinding element (DUE), permitting loading of DNA polymerase. After initiation quickly degrades to an ADP-DnaA complex that is not apt for DNA replication. Binds acidic phospholipids. This chain is Chromosomal replication initiator protein DnaA, found in Helicobacter pylori (strain G27).